The primary structure comprises 58 residues: MFSWGLTFLTIDNSLTNWLMIVLLFCSTGMVFLATILESGTCSAFTTVPEFPAPIFPN.

Residues 18 to 38 (WLMIVLLFCSTGMVFLATILE) form a helical membrane-spanning segment.

The protein localises to the membrane. This is an uncharacterized protein from Saccharomyces cerevisiae (strain ATCC 204508 / S288c) (Baker's yeast).